Consider the following 252-residue polypeptide: 5'-nucleotidase SurE (252 aa).

The a divalent metal cation site is built by Asp8, Asp9, Ser39, and Asn91.

Belongs to the SurE nucleotidase family. It depends on a divalent metal cation as a cofactor.

It is found in the cytoplasm. The enzyme catalyses a ribonucleoside 5'-phosphate + H2O = a ribonucleoside + phosphate. Nucleotidase that shows phosphatase activity on nucleoside 5'-monophosphates. This Gemmatimonas aurantiaca (strain DSM 14586 / JCM 11422 / NBRC 100505 / T-27) protein is 5'-nucleotidase SurE.